The following is a 1358-amino-acid chain: Probable aldehyde oxidase 1 (1358 aa).

Positions 4 to 91 (AAAVVAVNGE…HCAVTTSEGI (88 aa)) constitute a 2Fe-2S ferredoxin-type domain. Positions 43, 48, 51, and 73 each coordinate [2Fe-2S] cluster. The FAD-binding PCMH-type domain maps to 236–418 (AVTGDGCWFH…ISISIPDWCS (183 aa)). Residues 540-567 (KPENANNVPNGSCTTNGTTNGSAESTVD) form a disordered region. Low complexity predominate over residues 549 to 561 (NGSCTTNGTTNGS).

This sequence belongs to the xanthine dehydrogenase family. In terms of assembly, aldehyde oxidases (AO) are homodimers and heterodimers of AO subunits. [2Fe-2S] cluster is required as a cofactor. FAD serves as cofactor. The cofactor is Mo-molybdopterin.

It catalyses the reaction an aldehyde + O2 + H2O = a carboxylate + H2O2 + H(+). This chain is Probable aldehyde oxidase 1, found in Oryza sativa subsp. japonica (Rice).